Consider the following 628-residue polypeptide: Glutamyl-tRNA(Gln) amidotransferase subunit E (628 aa).

This sequence belongs to the GatB/GatE family. GatE subfamily. Heterodimer of GatD and GatE.

It carries out the reaction L-glutamyl-tRNA(Gln) + L-glutamine + ATP + H2O = L-glutaminyl-tRNA(Gln) + L-glutamate + ADP + phosphate + H(+). Functionally, allows the formation of correctly charged Gln-tRNA(Gln) through the transamidation of misacylated Glu-tRNA(Gln) in organisms which lack glutaminyl-tRNA synthetase. The reaction takes place in the presence of glutamine and ATP through an activated gamma-phospho-Glu-tRNA(Gln). The GatDE system is specific for glutamate and does not act on aspartate. The sequence is that of Glutamyl-tRNA(Gln) amidotransferase subunit E from Sulfurisphaera tokodaii (strain DSM 16993 / JCM 10545 / NBRC 100140 / 7) (Sulfolobus tokodaii).